A 318-amino-acid chain; its full sequence is Leucine-rich repeat domain-containing protein YddK (318 aa).

LRR repeat units follow at residues 109-129 (NFTSINLDNNQFTHFDATNYD), 130-151 (RLVKLSLNSNALESINFPQGRN), 153-173 (SITHISMNNNALRNIDIDRLS), 174-194 (SVTYFSAAHNQLEFVQLESCE), 195-216 (WLQYLNLSHNQLTDIVAGNKNE), 217-237 (LLLLDLSHNKLTSLHNDLFPN), 238-258 (LNTLLINNNLLSEIKIFYSNF), 260-280 (NVQTLNAANNQLKYINLDFLT), and 284-305 (SIKSLRLDNNKITHIDTNNTSD).

This chain is Leucine-rich repeat domain-containing protein YddK (yddK), found in Escherichia coli (strain K12).